The chain runs to 1413 residues: DNA-directed RNA polymerase subunit beta' (1413 aa).

Zn(2+) is bound by residues Cys-70, Cys-72, Cys-85, and Cys-88. Mg(2+) contacts are provided by Asp-460, Asp-462, and Asp-464. Zn(2+) contacts are provided by Cys-819, Cys-893, Cys-900, and Cys-903.

The protein belongs to the RNA polymerase beta' chain family. As to quaternary structure, the RNAP catalytic core consists of 2 alpha, 1 beta, 1 beta' and 1 omega subunit. When a sigma factor is associated with the core the holoenzyme is formed, which can initiate transcription. Requires Mg(2+) as cofactor. The cofactor is Zn(2+).

It catalyses the reaction RNA(n) + a ribonucleoside 5'-triphosphate = RNA(n+1) + diphosphate. Functionally, DNA-dependent RNA polymerase catalyzes the transcription of DNA into RNA using the four ribonucleoside triphosphates as substrates. In Burkholderia ambifaria (strain MC40-6), this protein is DNA-directed RNA polymerase subunit beta'.